A 120-amino-acid chain; its full sequence is Seripauperin-8 (120 aa).

An N-terminal signal peptide occupies residues 1-20 (MVKLTSIAAGVAAIAATASA).

It belongs to the SRP1/TIP1 family. Seripauperin subfamily.

In Saccharomyces cerevisiae (strain ATCC 204508 / S288c) (Baker's yeast), this protein is Seripauperin-8 (PAU8).